We begin with the raw amino-acid sequence, 95 residues long: UPF0473 protein CD630_12860 (95 aa).

Belongs to the UPF0473 family.

This Clostridioides difficile (strain 630) (Peptoclostridium difficile) protein is UPF0473 protein CD630_12860.